Reading from the N-terminus, the 221-residue chain is UPF0502 protein CPS_0106 (221 aa).

It belongs to the UPF0502 family.

The polypeptide is UPF0502 protein CPS_0106 (Colwellia psychrerythraea (strain 34H / ATCC BAA-681) (Vibrio psychroerythus)).